Consider the following 109-residue polypeptide: Parvalbumin beta (109 aa).

2 consecutive EF-hand domains span residues 38 to 73 (KSKD…FDGK) and 77 to 109 (LTDK…VTKG). Ca(2+) is bound by residues Asp51, Asp53, Ser55, Tyr57, Glu59, Glu62, Asp90, Asp92, Asp94, Lys96, and Glu101.

This sequence belongs to the parvalbumin family.

In muscle, parvalbumin is thought to be involved in relaxation after contraction. It binds two calcium ions. This chain is Parvalbumin beta, found in Boa constrictor (Boa).